We begin with the raw amino-acid sequence, 469 residues long: Glutamate--tRNA ligase (469 aa).

The short motif at 12–22 (PSPTGFIHLGN) is the 'HIGH' region element. A 'KMSKS' region motif is present at residues 244–248 (KMSKR). Lys247 provides a ligand contact to ATP.

Belongs to the class-I aminoacyl-tRNA synthetase family. Glutamate--tRNA ligase type 1 subfamily. In terms of assembly, monomer.

Its subcellular location is the cytoplasm. It catalyses the reaction tRNA(Glu) + L-glutamate + ATP = L-glutamyl-tRNA(Glu) + AMP + diphosphate. Catalyzes the attachment of glutamate to tRNA(Glu) in a two-step reaction: glutamate is first activated by ATP to form Glu-AMP and then transferred to the acceptor end of tRNA(Glu). The polypeptide is Glutamate--tRNA ligase (Acidovorax sp. (strain JS42)).